A 198-amino-acid chain; its full sequence is Glycerol-3-phosphate acyltransferase (198 aa).

Transmembrane regions (helical) follow at residues 6 to 26, 56 to 78, 83 to 101, 113 to 133, and 154 to 174; these read MLPV…GLIL, LAAA…AGYL, AAML…PVWL, IGIL…VWLA, and IVLW…LTLL.

The protein belongs to the PlsY family. As to quaternary structure, probably interacts with PlsX.

Its subcellular location is the cell inner membrane. It catalyses the reaction an acyl phosphate + sn-glycerol 3-phosphate = a 1-acyl-sn-glycero-3-phosphate + phosphate. It participates in lipid metabolism; phospholipid metabolism. Catalyzes the transfer of an acyl group from acyl-phosphate (acyl-PO(4)) to glycerol-3-phosphate (G3P) to form lysophosphatidic acid (LPA). This enzyme utilizes acyl-phosphate as fatty acyl donor, but not acyl-CoA or acyl-ACP. The protein is Glycerol-3-phosphate acyltransferase of Bradyrhizobium sp. (strain ORS 278).